Reading from the N-terminus, the 151-residue chain is Ribosome maturation factor RimP (151 aa).

This sequence belongs to the RimP family.

It localises to the cytoplasm. In terms of biological role, required for maturation of 30S ribosomal subunits. The sequence is that of Ribosome maturation factor RimP from Caldanaerobacter subterraneus subsp. tengcongensis (strain DSM 15242 / JCM 11007 / NBRC 100824 / MB4) (Thermoanaerobacter tengcongensis).